The following is a 577-amino-acid chain: Peroxynitrite isomerase THAP4 (577 aa).

A THAP-type zinc finger spans residues 1 to 85; it reads MVICCAAVNC…LKPTAVPSIF (85 aa). The tract at residues 84 to 221 is disordered; sequence IFHLTEKKRG…DKSGISMDDF (138 aa). Residues 157 to 170 show a composition bias toward low complexity; sequence AAQEAASQEQAQQA. Ser163 carries the phosphoserine modification. The HCFC1-binding motif (HBM) motif lies at 235-238; that stretch reads LHSY. Ser239 carries the phosphoserine modification. Residues 240-324 are disordered; sequence FSSKHTRERP…AVQSEHSDAS (85 aa). Basic and acidic residues predominate over residues 247 to 266; that stretch reads ERPSVPREPIDRKRLKKDVE. The segment covering 290–300 has biased composition (low complexity); it reads TATPQKPSQSP. The nitrobindin stretch occupies residues 415–577; sequence PPKMNPVVEP…LHVTYKKVTP (163 aa). Heme b-binding residues include Thr444 and His567.

In the C-terminal section; belongs to the nitrobindin family. As to quaternary structure, homodimer. Heme b is required as a cofactor.

It localises to the cytoplasm. The protein localises to the nucleus. It catalyses the reaction peroxynitrite = nitrate. The protein operates within nitrogen metabolism. In terms of biological role, heme-binding protein able to scavenge peroxynitrite and to protect free L-tyrosine against peroxynitrite-mediated nitration, by acting as a peroxynitrite isomerase that converts peroxynitrite to nitrate. Therefore, this protein likely plays a role in peroxynitrite sensing and in the detoxification of reactive nitrogen and oxygen species (RNS and ROS, respectively). Is able to bind nitric oxide (NO) in vitro, but may act as a sensor of peroxynitrite levels in vivo, possibly modulating the transcriptional activity residing in the N-terminal region. The protein is Peroxynitrite isomerase THAP4 of Homo sapiens (Human).